Here is a 263-residue protein sequence, read N- to C-terminus: Acyl-[acyl-carrier-protein]--UDP-N-acetylglucosamine O-acyltransferase (263 aa).

The protein belongs to the transferase hexapeptide repeat family. LpxA subfamily. In terms of assembly, homotrimer.

Its subcellular location is the cytoplasm. It carries out the reaction a (3R)-hydroxyacyl-[ACP] + UDP-N-acetyl-alpha-D-glucosamine = a UDP-3-O-[(3R)-3-hydroxyacyl]-N-acetyl-alpha-D-glucosamine + holo-[ACP]. It functions in the pathway glycolipid biosynthesis; lipid IV(A) biosynthesis; lipid IV(A) from (3R)-3-hydroxytetradecanoyl-[acyl-carrier-protein] and UDP-N-acetyl-alpha-D-glucosamine: step 1/6. Involved in the biosynthesis of lipid A, a phosphorylated glycolipid that anchors the lipopolysaccharide to the outer membrane of the cell. The polypeptide is Acyl-[acyl-carrier-protein]--UDP-N-acetylglucosamine O-acyltransferase (Xanthomonas axonopodis pv. citri (strain 306)).